A 386-amino-acid chain; its full sequence is Succinate--CoA ligase [ADP-forming] subunit beta (386 aa).

An ATP-grasp domain is found at 9–244 (KQILKKYGAV…LNEEDPTEID (236 aa)). Residues Lys46, 53-55 (GRG), Glu99, Ser102, and Glu107 each bind ATP. Asn199 and Asp213 together coordinate Mg(2+). Substrate is bound by residues Asn264 and 321–323 (GIM).

It belongs to the succinate/malate CoA ligase beta subunit family. As to quaternary structure, heterotetramer of two alpha and two beta subunits. The cofactor is Mg(2+).

The catalysed reaction is succinate + ATP + CoA = succinyl-CoA + ADP + phosphate. It carries out the reaction GTP + succinate + CoA = succinyl-CoA + GDP + phosphate. The protein operates within carbohydrate metabolism; tricarboxylic acid cycle; succinate from succinyl-CoA (ligase route): step 1/1. Its function is as follows. Succinyl-CoA synthetase functions in the citric acid cycle (TCA), coupling the hydrolysis of succinyl-CoA to the synthesis of either ATP or GTP and thus represents the only step of substrate-level phosphorylation in the TCA. The beta subunit provides nucleotide specificity of the enzyme and binds the substrate succinate, while the binding sites for coenzyme A and phosphate are found in the alpha subunit. The chain is Succinate--CoA ligase [ADP-forming] subunit beta from Pelagibacter ubique (strain HTCC1062).